Consider the following 129-residue polypeptide: UPF0047 protein Mb2586c (129 aa).

Belongs to the UPF0047 family.

In Mycobacterium bovis (strain ATCC BAA-935 / AF2122/97), this protein is UPF0047 protein Mb2586c.